An 853-amino-acid polypeptide reads, in one-letter code: DNA mismatch repair protein MutS (853 aa).

614 to 621 (GPNMGGKS) is a binding site for ATP.

The protein belongs to the DNA mismatch repair MutS family.

This protein is involved in the repair of mismatches in DNA. It is possible that it carries out the mismatch recognition step. This protein has a weak ATPase activity. This chain is DNA mismatch repair protein MutS, found in Escherichia coli O81 (strain ED1a).